The primary structure comprises 309 residues: Probable cell wall protein PGA50 (309 aa).

An N-terminal signal peptide occupies residues 1–17; it reads MKLNLLLLLFIVELVAA. N-linked (GlcNAc...) asparagine glycosylation is found at Asn-67, Asn-115, Asn-248, Asn-267, and Asn-277. The disordered stretch occupies residues 241-281; that stretch reads STTTFSSNGTSSGTTNGDTRAETKSSNSTQTSSSDKNSSQI. A lipid anchor (GPI-anchor amidated serine) is attached at Ser-286. Positions 287-309 are cleaved as a propeptide — removed in mature form; sequence TGVANFVASFGMGTLLLFVLSLC.

This sequence belongs to the IHD1 family. In terms of processing, the GPI-anchor is attached to the protein in the endoplasmic reticulum and serves to target the protein to the cell surface. There, the glucosamine-inositol phospholipid moiety is cleaved off and the GPI-modified mannoprotein is covalently attached via its lipidless GPI glycan remnant to the 1,6-beta-glucan of the outer cell wall layer.

It is found in the secreted. It localises to the cell wall. The protein localises to the membrane. Its function is as follows. Probable GPI-anchored cell wall protein that may be involved in cell wall organization, hyphal growth, as well as in virulence. In Candida albicans (strain SC5314 / ATCC MYA-2876) (Yeast), this protein is Probable cell wall protein PGA50 (PGA50).